The chain runs to 227 residues: Transcription antitermination protein NusB (227 aa).

Disordered regions lie at residues Ala-165–Asp-189 and Ala-201–Ser-227. Acidic residues-rich tracts occupy residues Asp-178–Asp-189 and Ala-201–Ser-214. Positions Glu-215–Ser-227 are enriched in basic and acidic residues.

It belongs to the NusB family.

Functionally, involved in transcription antitermination. Required for transcription of ribosomal RNA (rRNA) genes. Binds specifically to the boxA antiterminator sequence of the ribosomal RNA (rrn) operons. In Corynebacterium glutamicum (strain ATCC 13032 / DSM 20300 / JCM 1318 / BCRC 11384 / CCUG 27702 / LMG 3730 / NBRC 12168 / NCIMB 10025 / NRRL B-2784 / 534), this protein is Transcription antitermination protein NusB.